The chain runs to 955 residues: Kinesin-like protein KIN-14L (955 aa).

Residues 19 to 140 form the Calponin-homology (CH) domain; that stretch reads AARRFQAVQW…CILGLKAYHE (122 aa). The 323-residue stretch at 363 to 685 folds into the Kinesin motor domain; the sequence is NIRVYCRVRP…LKFAQRVSTV (323 aa). Residue 445-452 coordinates ATP; sequence GQTGSGKT. Residues 692-719 adopt a coiled-coil conformation; it reads AHKETREVMHLKEQIENLKRALGTEEWN. The tract at residues 878 to 942 is disordered; it reads RKENIPADPR…GKPIENGKKD (65 aa). The segment covering 894–916 has biased composition (polar residues); the sequence is NNFSHIKSPDTSNAKTMRRQSLT.

It belongs to the TRAFAC class myosin-kinesin ATPase superfamily. Kinesin family. KIN-14 subfamily.

This Arabidopsis thaliana (Mouse-ear cress) protein is Kinesin-like protein KIN-14L.